The chain runs to 258 residues: U6 snRNA phosphodiesterase 1 (258 aa).

Residues Met-1–Thr-20 are disordered. His-117 functions as the Proton acceptor in the catalytic mechanism. AMP is bound by residues His-117–Ser-119, Tyr-200, and Pro-202–Ser-208. UMP-binding positions include Tyr-200 and Ser-204–Ser-208. The active-site Proton donor is the His-206.

It belongs to the 2H phosphoesterase superfamily. USB1 family.

The protein resides in the nucleus. It carries out the reaction a 3'-end uridylyl-uridine-RNA = a 3'-end 2',3'-cyclophospho-uridine-RNA + uridine. 3'-5' RNA exonuclease that trims the 3' end of oligo(U) tracts of the pre-U6 small nuclear RNA (snRNA) molecule, leading to the formation of a mature U6 snRNA 3' end-terminated with a 2',3'-cyclic phosphate. Participates in the U6 snRNA 3' end processing that prevents U6 snRNA degradation. This Drosophila melanogaster (Fruit fly) protein is U6 snRNA phosphodiesterase 1.